The sequence spans 361 residues: Hydroxymethylglutaryl-CoA synthase (361 aa).

Catalysis depends on E92, which acts as the Proton donor/acceptor. The Acyl-thioester intermediate role is filled by C124. (3S)-3-hydroxy-3-methylglutaryl-CoA contacts are provided by C124, S165, T214, and H247. Residue H247 is the Proton donor/acceptor of the active site. Position 252 (K252) interacts with CoA. Positions 256, 279, and 309 each coordinate (3S)-3-hydroxy-3-methylglutaryl-CoA.

Belongs to the thiolase-like superfamily. Archaeal HMG-CoA synthase family. In terms of assembly, interacts with acetoacetyl-CoA thiolase that catalyzes the precedent step in the pathway and with a DUF35 protein. The acetoacetyl-CoA thiolase/HMG-CoA synthase complex channels the intermediate via a fused CoA-binding site, which allows for efficient coupling of the endergonic thiolase reaction with the exergonic HMGCS reaction.

It catalyses the reaction acetoacetyl-CoA + acetyl-CoA + H2O = (3S)-3-hydroxy-3-methylglutaryl-CoA + CoA + H(+). The protein operates within metabolic intermediate biosynthesis; (R)-mevalonate biosynthesis; (R)-mevalonate from acetyl-CoA: step 2/3. Functionally, catalyzes the condensation of acetyl-CoA with acetoacetyl-CoA to form 3-hydroxy-3-methylglutaryl-CoA (HMG-CoA). Functions in the mevalonate (MVA) pathway leading to isopentenyl diphosphate (IPP), a key precursor for the biosynthesis of isoprenoid compounds that are building blocks of archaeal membrane lipids. This chain is Hydroxymethylglutaryl-CoA synthase, found in Aeropyrum pernix (strain ATCC 700893 / DSM 11879 / JCM 9820 / NBRC 100138 / K1).